The primary structure comprises 381 residues: Succinyl-diaminopimelate desuccinylase (381 aa).

Position 72 (histidine 72) interacts with Zn(2+). The active site involves aspartate 74. Aspartate 105 provides a ligand contact to Zn(2+). Catalysis depends on glutamate 139, which acts as the Proton acceptor. Zn(2+)-binding residues include glutamate 140, glutamate 168, and histidine 354.

It belongs to the peptidase M20A family. DapE subfamily. Homodimer. The cofactor is Zn(2+). Co(2+) is required as a cofactor.

The catalysed reaction is N-succinyl-(2S,6S)-2,6-diaminopimelate + H2O = (2S,6S)-2,6-diaminopimelate + succinate. It functions in the pathway amino-acid biosynthesis; L-lysine biosynthesis via DAP pathway; LL-2,6-diaminopimelate from (S)-tetrahydrodipicolinate (succinylase route): step 3/3. Catalyzes the hydrolysis of N-succinyl-L,L-diaminopimelic acid (SDAP), forming succinate and LL-2,6-diaminopimelate (DAP), an intermediate involved in the bacterial biosynthesis of lysine and meso-diaminopimelic acid, an essential component of bacterial cell walls. The protein is Succinyl-diaminopimelate desuccinylase of Shewanella sp. (strain MR-7).